Consider the following 399-residue polypeptide: Chorismate synthase (399 aa).

NADP(+) contacts are provided by Arg40 and Arg46. FMN contacts are provided by residues 135–137 (RAS), 256–257 (QA), Gly301, 316–320 (KPIAT), and Arg342.

Belongs to the chorismate synthase family. As to quaternary structure, homotetramer. FMNH2 is required as a cofactor.

It carries out the reaction 5-O-(1-carboxyvinyl)-3-phosphoshikimate = chorismate + phosphate. It functions in the pathway metabolic intermediate biosynthesis; chorismate biosynthesis; chorismate from D-erythrose 4-phosphate and phosphoenolpyruvate: step 7/7. In terms of biological role, catalyzes the anti-1,4-elimination of the C-3 phosphate and the C-6 proR hydrogen from 5-enolpyruvylshikimate-3-phosphate (EPSP) to yield chorismate, which is the branch point compound that serves as the starting substrate for the three terminal pathways of aromatic amino acid biosynthesis. This reaction introduces a second double bond into the aromatic ring system. The protein is Chorismate synthase of Arthrobacter sp. (strain FB24).